A 424-amino-acid chain; its full sequence is COUP transcription factor 1 (424 aa).

The segment at methionine 1–glutamine 82 is disordered. Low complexity predominate over residues glutamate 39–alanine 68. A DNA-binding region (nuclear receptor) is located at residues histidine 84–arginine 159. 2 NR C4-type zinc fingers span residues cysteine 87 to cysteine 107 and cysteine 123 to cysteine 147. Positions tyrosine 185–glycine 411 constitute an NR LBD domain.

Belongs to the nuclear hormone receptor family. NR2 subfamily. In terms of assembly, binds DNA as dimer; homodimer and probable heterodimer with NR2F6. Interacts with GTF2B; this interaction is direct. Interacts with COPS2.

The protein resides in the nucleus. Coup (chicken ovalbumin upstream promoter) transcription factor binds to the ovalbumin promoter and, in conjunction with another protein (S300-II) stimulates initiation of transcription. Binds to both direct repeats and palindromes of the 5'-AGGTCA-3' motif. Represses transcriptional activity of LHCG. This is COUP transcription factor 1 (NR2F1) from Bos taurus (Bovine).